The chain runs to 406 residues: Uronyl 2-sulfotransferase (406 aa).

The Cytoplasmic segment spans residues 1–49 (MKKKQQHPGGGADPWPHGAPMGGAPPGLGSWKRRVPLLPFLRFSLRDYG). Residues 50 to 70 (FCMATLLVFCLGSLLYQLSGG) form a helical; Signal-anchor for type II membrane protein membrane-spanning segment. Residues 71–406 (PPRFLLDLRQ…EKWLEDIYKR (336 aa)) lie on the Lumenal side of the membrane. Asn84, Asn140, and Asn155 each carry an N-linked (GlcNAc...) asparagine glycan. His168 is a catalytic residue. N-linked (GlcNAc...) asparagine glycans are attached at residues Asn173 and Asn319. Acidic residues predominate over residues 387 to 399 (EPIDDEEQDDEKW). The segment at 387 to 406 (EPIDDEEQDDEKWLEDIYKR) is disordered.

This sequence belongs to the sulfotransferase 3 family. As to expression, widely expressed.

It localises to the golgi apparatus membrane. In terms of biological role, sulfotransferase that catalyzes the transfer of sulfate to the position 2 of uronyl residues in glycosaminoglycan chains. Has mainly activity toward iduronyl residues in dermatan sulfate, and weaker activity toward glucuronyl residues of chondroitin sulfate. Has little to no activity toward desulfated N-resulfated heparin or N-sulfoheparosan. This chain is Uronyl 2-sulfotransferase, found in Homo sapiens (Human).